Here is a 221-residue protein sequence, read N- to C-terminus: Small ribosomal subunit protein uS3 (221 aa).

In terms of domain architecture, KH type-2 spans 39 to 107; it reads IREYIKRKLY…QVHVNIVEVK (69 aa).

This sequence belongs to the universal ribosomal protein uS3 family. Part of the 30S ribosomal subunit. Forms a tight complex with proteins S10 and S14.

In terms of biological role, binds the lower part of the 30S subunit head. Binds mRNA in the 70S ribosome, positioning it for translation. The protein is Small ribosomal subunit protein uS3 of Desulforamulus reducens (strain ATCC BAA-1160 / DSM 100696 / MI-1) (Desulfotomaculum reducens).